We begin with the raw amino-acid sequence, 681 residues long: DNA-directed RNA polymerase subunit beta' (681 aa).

Zn(2+) contacts are provided by cysteine 69, cysteine 71, cysteine 87, and cysteine 90. Mg(2+) contacts are provided by aspartate 489, aspartate 491, and aspartate 493.

It belongs to the RNA polymerase beta' chain family. RpoC1 subfamily. In plastids the minimal PEP RNA polymerase catalytic core is composed of four subunits: alpha, beta, beta', and beta''. When a (nuclear-encoded) sigma factor is associated with the core the holoenzyme is formed, which can initiate transcription. Mg(2+) is required as a cofactor. It depends on Zn(2+) as a cofactor.

It is found in the plastid. It localises to the chloroplast. The catalysed reaction is RNA(n) + a ribonucleoside 5'-triphosphate = RNA(n+1) + diphosphate. Its function is as follows. DNA-dependent RNA polymerase catalyzes the transcription of DNA into RNA using the four ribonucleoside triphosphates as substrates. The protein is DNA-directed RNA polymerase subunit beta' of Anthoceros angustus (Hornwort).